Consider the following 210-residue polypeptide: Outer-membrane lipoprotein carrier protein (210 aa).

The first 22 residues, 1-22 (MRAFKWALAIGATLALPLTAQA), serve as a signal peptide directing secretion.

The protein belongs to the LolA family. As to quaternary structure, monomer.

It is found in the periplasm. Its function is as follows. Participates in the translocation of lipoproteins from the inner membrane to the outer membrane. Only forms a complex with a lipoprotein if the residue after the N-terminal Cys is not an aspartate (The Asp acts as a targeting signal to indicate that the lipoprotein should stay in the inner membrane). The chain is Outer-membrane lipoprotein carrier protein from Chromohalobacter salexigens (strain ATCC BAA-138 / DSM 3043 / CIP 106854 / NCIMB 13768 / 1H11).